We begin with the raw amino-acid sequence, 827 residues long: Periplasmic nitrate reductase (827 aa).

A signal peptide (tat-type signal) is located at residues 1–32 (MELSRRDFMKANAAVAAAAAAGIVLPVKNVQA). The 4Fe-4S Mo/W bis-MGD-type domain maps to 37–93 (IKWDKAPCRFCGTGCSVLVGTKDGRVVATQGDPDAEVNRGLNCIKGYFLSKIMYGAD). Cys44, Cys47, Cys51, and Cys79 together coordinate [4Fe-4S] cluster. Mo-bis(molybdopterin guanine dinucleotide) is bound by residues Lys81, Gln148, Asn173, Cys177, 210-217 (WGSNMAEM), 241-245 (STFEH), Met371, Gln375, Asn481, 507-508 (SD), Lys530, Asp557, and 717-726 (TGRVLEHWHT). A substrate-binding site is contributed by Phe793. 2 residues coordinate Mo-bis(molybdopterin guanine dinucleotide): Asn801 and Lys818.

It belongs to the prokaryotic molybdopterin-containing oxidoreductase family. NasA/NapA/NarB subfamily. Component of the periplasmic nitrate reductase NapAB complex composed of NapA and NapB. [4Fe-4S] cluster serves as cofactor. Requires Mo-bis(molybdopterin guanine dinucleotide) as cofactor. Predicted to be exported by the Tat system. The position of the signal peptide cleavage has not been experimentally proven.

Its subcellular location is the periplasm. The enzyme catalyses 2 Fe(II)-[cytochrome] + nitrate + 2 H(+) = 2 Fe(III)-[cytochrome] + nitrite + H2O. In terms of biological role, catalytic subunit of the periplasmic nitrate reductase complex NapAB. Receives electrons from NapB and catalyzes the reduction of nitrate to nitrite. In Haemophilus ducreyi (strain 35000HP / ATCC 700724), this protein is Periplasmic nitrate reductase.